A 282-amino-acid chain; its full sequence is NADPH-dependent 7-cyano-7-deazaguanine reductase (282 aa).

88 to 90 contacts substrate; it reads IES. Residue 90 to 91 participates in NADPH binding; sequence SK. Cys190 acts as the Thioimide intermediate in catalysis. Catalysis depends on Asp197, which acts as the Proton donor. 229–230 lines the substrate pocket; it reads HE. Residue 258 to 259 coordinates NADPH; that stretch reads RG.

It belongs to the GTP cyclohydrolase I family. QueF type 2 subfamily. As to quaternary structure, homodimer.

Its subcellular location is the cytoplasm. It carries out the reaction 7-aminomethyl-7-carbaguanine + 2 NADP(+) = 7-cyano-7-deazaguanine + 2 NADPH + 3 H(+). The protein operates within tRNA modification; tRNA-queuosine biosynthesis. In terms of biological role, catalyzes the NADPH-dependent reduction of 7-cyano-7-deazaguanine (preQ0) to 7-aminomethyl-7-deazaguanine (preQ1). The chain is NADPH-dependent 7-cyano-7-deazaguanine reductase from Salmonella paratyphi A (strain ATCC 9150 / SARB42).